The primary structure comprises 88 residues: Small ribosomal subunit protein bS20 (88 aa).

This sequence belongs to the bacterial ribosomal protein bS20 family.

Functionally, binds directly to 16S ribosomal RNA. The polypeptide is Small ribosomal subunit protein bS20 (Bartonella quintana (strain Toulouse) (Rochalimaea quintana)).